The sequence spans 382 residues: Na(+)/H(+) antiporter NhaA 2 (382 aa).

Transmembrane regions (helical) follow at residues 7 to 27 (AGGV…NSYL), 28 to 48 (SGFY…AFEI), 52 to 72 (LLLW…GLEV), 88 to 108 (VLPG…YASF), 118 to 138 (GWAI…SLFG), 147 to 167 (LFLL…IALF), 170 to 190 (HELS…LFVL), 206 to 226 (LVVW…GFVI), 254 to 274 (VAYF…LGGI), 285 to 305 (LGII…VCWL), 325 to 345 (GVCL…SLAF), and 356 to 376 (VKLG…LILT).

It belongs to the NhaA Na(+)/H(+) (TC 2.A.33) antiporter family.

It is found in the cell inner membrane. The enzyme catalyses Na(+)(in) + 2 H(+)(out) = Na(+)(out) + 2 H(+)(in). Na(+)/H(+) antiporter that extrudes sodium in exchange for external protons. The protein is Na(+)/H(+) antiporter NhaA 2 of Saccharophagus degradans (strain 2-40 / ATCC 43961 / DSM 17024).